We begin with the raw amino-acid sequence, 868 residues long: Receptor-like protein 32 (868 aa).

Residues 1–32 form the signal peptide; the sequence is MKDSWNSTSIIPFTFSSLIFFLFTFDFQDVFG. Over 33 to 815 the chain is Extracellular; that stretch reads VPTKHLCRLE…PPELEEEDRE (783 aa). 4 N-linked (GlcNAc...) asparagine glycosylation sites follow: asparagine 73, asparagine 109, asparagine 141, and asparagine 165. LRR repeat units lie at residues 118-142, 143-166, 168-188, 189-213, 214-237, 239-261, 262-285, 287-310, 312-334, 335-360, 362-385, 389-412, 413-436, 438-459, 465-489, 490-515, 517-538, 540-560, 561-586, 588-606, 607-630, 675-699, 700-723, 724-747, and 749-772; these read LRFL…IENF, SHLT…IGNL, QLTF…FFGN, MNQL…LLNL, KHLS…MSSL, NLEY…LFTI, ASLT…NISS, STLT…ISKF, NLQD…IFTN, LKSL…LFSS, LNSI…SVAD, TQLI…LRSQ, HKMT…LWTL, KLIF…TEHG, KPSM…ICAL, RSLI…NLKS, LSFL…IFKS, RSLD…FIRL, SALE…SLKK, QVLV…HASF, HTLR…YFVN, LKIY…IGLL, KELH…MGNL, RELE…LGNL, and YLAY…QFRR. N-linked (GlcNAc...) asparagine glycosylation occurs at asparagine 233. 2 N-linked (GlcNAc...) asparagine glycosylation sites follow: asparagine 275 and asparagine 282. 2 N-linked (GlcNAc...) asparagine glycosylation sites follow: asparagine 342 and asparagine 347. N-linked (GlcNAc...) asparagine glycosylation is found at asparagine 477 and asparagine 503. Residue asparagine 574 is glycosylated (N-linked (GlcNAc...) asparagine). The N-linked (GlcNAc...) asparagine glycan is linked to asparagine 613. Asparagine 706, asparagine 746, asparagine 754, and asparagine 774 each carry an N-linked (GlcNAc...) asparagine glycan. The chain crosses the membrane as a helical span at residues 816 to 836; sequence VFSWIAAAIGFGPGIAFGLTI. Topologically, residues 837–868 are cytoplasmic; sequence RYILVFYKPDWFMHTFGHLQPSAHEKRLRRKQ.

This sequence belongs to the RLP family.

The protein localises to the cell membrane. In Arabidopsis thaliana (Mouse-ear cress), this protein is Receptor-like protein 32.